A 190-amino-acid chain; its full sequence is Ubiquinol-cytochrome c reductase iron-sulfur subunit (190 aa).

A helical membrane pass occupies residues 18–39 (FLYYATAGAGTVAAGAAAWTLV). In terms of domain architecture, Rieske spans 95–188 (GQLIDRSAQN…AEFLDDTTIK (94 aa)). Positions 132, 134, 152, and 155 each coordinate [2Fe-2S] cluster. Residues Cys137 and Cys154 are joined by a disulfide bond.

It belongs to the Rieske iron-sulfur protein family. As to quaternary structure, the main subunits of complex b-c1 are: cytochrome b, cytochrome c1 and the Rieske protein. [2Fe-2S] cluster serves as cofactor.

It localises to the cell membrane. The catalysed reaction is a quinol + 2 Fe(III)-[cytochrome c](out) = a quinone + 2 Fe(II)-[cytochrome c](out) + 2 H(+)(out). In terms of biological role, component of the ubiquinol-cytochrome c reductase complex (complex III or cytochrome b-c1 complex), which is a respiratory chain that generates an electrochemical potential coupled to ATP synthesis. This is Ubiquinol-cytochrome c reductase iron-sulfur subunit (petA) from Paracoccus denitrificans.